The sequence spans 541 residues: Acyl-CoA ligase M9 (541 aa).

An AMP-binding site is contributed by 186–197 (AMSTSGTTGLPK). Residues 445 to 519 (ELEAVLHQMP…DSLPRNSSGK (75 aa)) are AMP-binding.

This sequence belongs to the ATP-dependent AMP-binding enzyme family.

It participates in secondary metabolite biosynthesis. Acyl-CoA ligase; part of the gene cluster that mediates the biosynthesis of squalestatin S1 (SQS1, also known as zaragozic acid A), a heavily oxidized fungal polyketide that offers potent cholesterol lowering activity by targeting squalene synthase (SS). SQS1 is composed of a 2,8-dioxobicyclic[3.2.1]octane-3,4,5-tricarboxyclic acid core that is connected to two lipophilic polyketide arms. These initial steps feature the priming of an unusual benzoic acid starter unit onto the highly reducing polyketide synthase pks2, followed by oxaloacetate extension and product release to generate a tricarboxylic acid containing product. The phenylalanine ammonia lyase (PAL) M7 and the acyl-CoA ligase M9 are involved in transforming phenylalanine into benzoyl-CoA. The citrate synthase-like protein R3 is involved in connecting the C-alpha-carbons of the hexaketide chain and oxaloacetate to afford the tricarboxylic acid unit. The potential hydrolytic enzymes, M8 and M10, are in close proximity to pks2 and may participate in product release. On the other side, the tetraketide arm is synthesized by a the squalestatin tetraketide synthase pks1 and enzymatically esterified to the core in the last biosynthetic step, by the acetyltransferase M4. The biosynthesis of the tetraketide must involve 3 rounds of chain extension. After the first and second rounds methyl-transfer occurs, and in all rounds of extension the ketoreductase and dehydratase are active. The enoyl reductase and C-MeT of pks1 are not active in the final round of extension. The acetyltransferase M4 appears to have a broad substrate selectivity for its acyl CoA substrate, allowing the in vitro synthesis of novel squalestatins. The biosynthesis of SQS1 requires several oxidative steps likely performed by oxidoreductases M1, R1 and R2. Finally, in support of the identification of the cluster as being responsible for SQS1 production, the cluster contains a gene encoding a putative squalene synthase (SS) R6, suggesting a likely mechanism for self-resistance. This is Acyl-CoA ligase M9 from Phoma sp. (strain ATCC 20986 / MF5453).